Here is a 211-residue protein sequence, read N- to C-terminus: Endo-1,4-beta-xylanase A (211 aa).

The first 27 residues, 1 to 27, serve as a signal peptide directing secretion; sequence MKVTAAFAGLLVTAFAAPVPEPVLVSR. The region spanning 28–210 is the GH11 domain; it reads SAGINYVQNY…GAGSASVTIS (183 aa). Glutamate 106 acts as the Nucleophile in catalysis. The cysteines at positions 119 and 138 are disulfide-linked. Catalysis depends on glutamate 197, which acts as the Proton donor.

Belongs to the glycosyl hydrolase 11 (cellulase G) family.

Its subcellular location is the secreted. It carries out the reaction Endohydrolysis of (1-&gt;4)-beta-D-xylosidic linkages in xylans.. It functions in the pathway glycan degradation; xylan degradation. Endo-1,4-beta-xylanase involved in the hydrolysis of xylan, a major structural heterogeneous polysaccharide found in plant biomass representing the second most abundant polysaccharide in the biosphere, after cellulose. The chain is Endo-1,4-beta-xylanase A (xynA) from Aspergillus niger.